Here is a 646-residue protein sequence, read N- to C-terminus: MEPAAGFLSPRPFQRAAAAPAPPAGPGPPPSALRGPELEMLAGLPTSDPGRLITDPRSGRTYLKGRLLGKGGFARCYEATDTETGSAYAVKVIPQSRVAKPHQREKILNEIELHRDLQHRHIVRFSHHFEDADNIYIFLELCSRKSLAHIWKARHTLLEPEVRYYLRQILSGLKYLHQRGILHRDLKLGNFFITENMELKVGDFGLAARLEPPEQRKKTICGTPNYVAPEVLLRQGHGPEADVWSLGCVMYTLLCGSPPFETADLKETYRCIKQVHYTLPASLSLPARQLLAAILRASPRDRPSIDQILRHDFFTKGYTPDRLPISSCVTVPDLTPPNPARSLFAKVTKSLFGRKKKSKNHAQERDEVSGLVSGLMRTSVGHQDARPEAPAASGPAPVSLVETAPEDSSPRGTLASSGDGFEEGLTVATVVESALCALRNCIAFMPPAEQNPAPLAQPEPLVWVSKWVDYSNKFGFGYQLSSRRVAVLFNDGTHMALSANRKTVHYNPTSTKHFSFSVGAVPRALQPQLGILRYFASYMEQHLMKGGDLPSVEEVEVPAPPLLLQWVKTDQALLMLFSDGTVQVNFYGDHTKLILSGWEPLLVTFVARNRSACTYLASHLRQLGCSPDLRQRLRYALRLLRDRSPA.

A disordered region spans residues M1–G35. Over residues P10–A19 the composition is skewed to low complexity. Residues P20–S31 show a composition bias toward pro residues. One can recognise a Protein kinase domain in the interval Y62–F314. Residues L68–C76 and K91 contribute to the ATP site. The active-site Proton acceptor is the D185. The segment at G381–S417 is disordered. POLO box domains are found at residues W463 to Q541 and L562 to P645.

This sequence belongs to the protein kinase superfamily. Ser/Thr protein kinase family. CDC5/Polo subfamily. Interacts (via the POLO-box domain) with CIB1; leading to inhibit PLK3 kinase activity. Interacts with GOLGB1. In terms of processing, phosphorylated in an ATM-dependent manner following DNA damage. Phosphorylated as cells enter mitosis and dephosphorylated as cells exit mitosis. As to expression, transcripts are highly detected in placenta, lung, followed by skeletal muscle, heart, pancreas, ovaries and kidney and weakly detected in liver and brain. May have a short half-live. In cells of hematopoietic origin, strongly and exclusively detected in terminally differentiated macrophages. Transcript expression appears to be down-regulated in primary lung tumor.

It localises to the cytoplasm. The protein localises to the nucleus. It is found in the nucleolus. The protein resides in the golgi apparatus. Its subcellular location is the cytoskeleton. It localises to the microtubule organizing center. The protein localises to the centrosome. The enzyme catalyses L-seryl-[protein] + ATP = O-phospho-L-seryl-[protein] + ADP + H(+). It catalyses the reaction L-threonyl-[protein] + ATP = O-phospho-L-threonyl-[protein] + ADP + H(+). In terms of biological role, serine/threonine-protein kinase involved in cell cycle regulation, response to stress and Golgi disassembly. Polo-like kinases act by binding and phosphorylating proteins that are already phosphorylated on a specific motif recognized by the POLO box domains. Phosphorylates ATF2, BCL2L1, CDC25A, CDC25C, CHEK2, HIF1A, JUN, p53/TP53, p73/TP73, PTEN, TOP2A and VRK1. Involved in cell cycle regulation: required for entry into S phase and cytokinesis. Phosphorylates BCL2L1, leading to regulate the G2 checkpoint and progression to cytokinesis during mitosis. Plays a key role in response to stress: rapidly activated upon stress stimulation, such as ionizing radiation, reactive oxygen species (ROS), hyperosmotic stress, UV irradiation and hypoxia. Involved in DNA damage response and G1/S transition checkpoint by phosphorylating CDC25A, p53/TP53 and p73/TP73. Phosphorylates p53/TP53 in response to reactive oxygen species (ROS), thereby promoting p53/TP53-mediated apoptosis. Phosphorylates CHEK2 in response to DNA damage, promoting the G2/M transition checkpoint. Phosphorylates the transcription factor p73/TP73 in response to DNA damage, leading to inhibit p73/TP73-mediated transcriptional activation and pro-apoptotic functions. Phosphorylates HIF1A and JUN is response to hypoxia. Phosphorylates ATF2 following hyperosmotic stress in corneal epithelium. Also involved in Golgi disassembly during the cell cycle: part of a MEK1/MAP2K1-dependent pathway that induces Golgi fragmentation during mitosis by mediating phosphorylation of VRK1. May participate in endomitotic cell cycle, a form of mitosis in which both karyokinesis and cytokinesis are interrupted and is a hallmark of megakaryocyte differentiation, via its interaction with CIB1. This is Serine/threonine-protein kinase PLK3 (PLK3) from Homo sapiens (Human).